Consider the following 140-residue polypeptide: Small ribosomal subunit protein uS9A (140 aa).

Belongs to the universal ribosomal protein uS9 family. In terms of assembly, component of the small ribosomal subunit (SSU). Mature yeast ribosomes consist of a small (40S) and a large (60S) subunit. The 40S small subunit contains 1 molecule of ribosomal RNA (18S rRNA) and at least 33 different proteins. The large 60S subunit contains 3 rRNA molecules (25S, 5.8S and 5S rRNA) and at least 46 different proteins.

It is found in the cytoplasm. Component of the ribosome, a large ribonucleoprotein complex responsible for the synthesis of proteins in the cell. The small ribosomal subunit (SSU) binds messenger RNAs (mRNAs) and translates the encoded message by selecting cognate aminoacyl-transfer RNA (tRNA) molecules. The large subunit (LSU) contains the ribosomal catalytic site termed the peptidyl transferase center (PTC), which catalyzes the formation of peptide bonds, thereby polymerizing the amino acids delivered by tRNAs into a polypeptide chain. The nascent polypeptides leave the ribosome through a tunnel in the LSU and interact with protein factors that function in enzymatic processing, targeting, and the membrane insertion of nascent chains at the exit of the ribosomal tunnel. The polypeptide is Small ribosomal subunit protein uS9A (rps1601) (Schizosaccharomyces pombe (strain 972 / ATCC 24843) (Fission yeast)).